Consider the following 68-residue polypeptide: Basic phospholipase A2 homolog BdipTx-I (68 aa).

An intrachain disulfide couples Cys-28 to Cys-44.

The protein belongs to the phospholipase A2 family. Group II subfamily. K49 sub-subfamily. In terms of tissue distribution, expressed by the venom gland.

The protein localises to the secreted. In terms of biological role, snake venom phospholipase A2 (PLA2) that lacks enzymatic activity. Is myotoxic, induces edema, and causes systemic effects (renal changes that lead to proteinuria) on mice. A model of myotoxic mechanism has been proposed: an apo Lys49-PLA2 is activated by the entrance of a hydrophobic molecule (e.g. fatty acid) at the hydrophobic channel of the protein leading to a reorientation of a monomer. This reorientation causes a transition between 'inactive' to 'active' states, causing alignment of C-terminal and membrane-docking sites (MDoS) side-by-side and putting the membrane-disruption sites (MDiS) in the same plane, exposed to solvent and in a symmetric position for both monomers. The MDoS region stabilizes the toxin on membrane by the interaction of charged residues with phospholipid head groups. Subsequently, the MDiS region destabilizes the membrane with penetration of hydrophobic residues. This insertion causes a disorganization of the membrane, allowing an uncontrolled influx of ions (i.e. calcium and sodium), and eventually triggering irreversible intracellular alterations and cell death. The chain is Basic phospholipase A2 homolog BdipTx-I from Bothrops diporus (Chaco lancehead).